The primary structure comprises 364 residues: Anhydro-N-acetylmuramic acid kinase (364 aa).

11-18 (GSSLDGID) contributes to the ATP binding site.

It belongs to the anhydro-N-acetylmuramic acid kinase family.

The enzyme catalyses 1,6-anhydro-N-acetyl-beta-muramate + ATP + H2O = N-acetyl-D-muramate 6-phosphate + ADP + H(+). Its pathway is amino-sugar metabolism; 1,6-anhydro-N-acetylmuramate degradation. The protein operates within cell wall biogenesis; peptidoglycan recycling. Catalyzes the specific phosphorylation of 1,6-anhydro-N-acetylmuramic acid (anhMurNAc) with the simultaneous cleavage of the 1,6-anhydro ring, generating MurNAc-6-P. Is required for the utilization of anhMurNAc either imported from the medium or derived from its own cell wall murein, and thus plays a role in cell wall recycling. This Pseudomonas syringae pv. syringae (strain B728a) protein is Anhydro-N-acetylmuramic acid kinase.